The primary structure comprises 289 residues: Right origin-binding protein (289 aa).

The HTH araC/xylS-type domain occupies 8–106 (RDLLIWLEGH…AQTPALYRRS (99 aa)). DNA-binding regions (H-T-H motif) lie at residues 25-46 (DNVA…KDVT) and 73-96 (ILDI…KKQF).

Its function is as follows. Transcriptional regulator. Binds to the right arm of the replication origin oriC of the chromosome. Rob binding may influence the formation of the nucleoprotein structure, required for oriC function in the initiation of replication. This is Right origin-binding protein (rob) from Escherichia coli O157:H7.